A 93-amino-acid chain; its full sequence is Phosphoribosyl-ATP pyrophosphatase (93 aa).

The protein belongs to the PRA-PH family.

It is found in the cytoplasm. It catalyses the reaction 1-(5-phospho-beta-D-ribosyl)-ATP + H2O = 1-(5-phospho-beta-D-ribosyl)-5'-AMP + diphosphate + H(+). It participates in amino-acid biosynthesis; L-histidine biosynthesis; L-histidine from 5-phospho-alpha-D-ribose 1-diphosphate: step 2/9. This Mycobacterium leprae (strain Br4923) protein is Phosphoribosyl-ATP pyrophosphatase.